Reading from the N-terminus, the 458-residue chain is ATP synthase subunit beta (458 aa).

148 to 155 contacts ATP; the sequence is GGAGVGKT.

It belongs to the ATPase alpha/beta chains family. In terms of assembly, F-type ATPases have 2 components, CF(1) - the catalytic core - and CF(0) - the membrane proton channel. CF(1) has five subunits: alpha(3), beta(3), gamma(1), delta(1), epsilon(1). CF(0) has three main subunits: a(1), b(2) and c(9-12). The alpha and beta chains form an alternating ring which encloses part of the gamma chain. CF(1) is attached to CF(0) by a central stalk formed by the gamma and epsilon chains, while a peripheral stalk is formed by the delta and b chains.

The protein resides in the cell inner membrane. It catalyses the reaction ATP + H2O + 4 H(+)(in) = ADP + phosphate + 5 H(+)(out). Produces ATP from ADP in the presence of a proton gradient across the membrane. The catalytic sites are hosted primarily by the beta subunits. This chain is ATP synthase subunit beta, found in Pseudomonas aeruginosa (strain LESB58).